The following is a 729-amino-acid chain: Fatty acid oxidation complex subunit alpha (729 aa).

An enoyl-CoA hydratase/isomerase region spans residues Met1–Lys189. Substrate is bound at residue Asp296. Residues Glu311–Ala729 form a 3-hydroxyacyl-CoA dehydrogenase region. NAD(+) contacts are provided by residues Met324, Asp343, Val400 to Glu402, Lys407, and Ser429. Residue His450 is the For 3-hydroxyacyl-CoA dehydrogenase activity of the active site. An NAD(+)-binding site is contributed by Asn453. 2 residues coordinate substrate: Asn500 and Tyr660. The tract at residues Arg708 to Ala729 is disordered.

In the N-terminal section; belongs to the enoyl-CoA hydratase/isomerase family. The protein in the C-terminal section; belongs to the 3-hydroxyacyl-CoA dehydrogenase family. In terms of assembly, heterotetramer of two alpha chains (FadB) and two beta chains (FadA).

It carries out the reaction a (3S)-3-hydroxyacyl-CoA + NAD(+) = a 3-oxoacyl-CoA + NADH + H(+). The enzyme catalyses a (3S)-3-hydroxyacyl-CoA = a (2E)-enoyl-CoA + H2O. It catalyses the reaction a 4-saturated-(3S)-3-hydroxyacyl-CoA = a (3E)-enoyl-CoA + H2O. The catalysed reaction is (3S)-3-hydroxybutanoyl-CoA = (3R)-3-hydroxybutanoyl-CoA. It carries out the reaction a (3Z)-enoyl-CoA = a 4-saturated (2E)-enoyl-CoA. The enzyme catalyses a (3E)-enoyl-CoA = a 4-saturated (2E)-enoyl-CoA. Its pathway is lipid metabolism; fatty acid beta-oxidation. Its function is as follows. Involved in the aerobic and anaerobic degradation of long-chain fatty acids via beta-oxidation cycle. Catalyzes the formation of 3-oxoacyl-CoA from enoyl-CoA via L-3-hydroxyacyl-CoA. It can also use D-3-hydroxyacyl-CoA and cis-3-enoyl-CoA as substrate. In Citrobacter koseri (strain ATCC BAA-895 / CDC 4225-83 / SGSC4696), this protein is Fatty acid oxidation complex subunit alpha.